We begin with the raw amino-acid sequence, 199 residues long: Octanoyltransferase (199 aa).

One can recognise a BPL/LPL catalytic domain in the interval 27-199 (SNSCDELWLL…FVQYFLTQFK (173 aa)). Substrate-binding positions include 66 to 73 (RGGQVTYH), 133 to 135 (SIG), and 146 to 148 (GIA). The active-site Acyl-thioester intermediate is Cys-164.

It belongs to the LipB family.

The protein resides in the cytoplasm. The catalysed reaction is octanoyl-[ACP] + L-lysyl-[protein] = N(6)-octanoyl-L-lysyl-[protein] + holo-[ACP] + H(+). It participates in protein modification; protein lipoylation via endogenous pathway; protein N(6)-(lipoyl)lysine from octanoyl-[acyl-carrier-protein]: step 1/2. Catalyzes the transfer of endogenously produced octanoic acid from octanoyl-acyl-carrier-protein onto the lipoyl domains of lipoate-dependent enzymes. Lipoyl-ACP can also act as a substrate although octanoyl-ACP is likely to be the physiological substrate. The polypeptide is Octanoyltransferase (Legionella pneumophila (strain Paris)).